Consider the following 174-residue polypeptide: Co-chaperone protein HscB homolog (174 aa).

The region spanning 2–74 (NYFNLFNFTP…LRRAEHLLSL (73 aa)) is the J domain.

The protein belongs to the HscB family. In terms of assembly, interacts with HscA and stimulates its ATPase activity.

Its function is as follows. Co-chaperone involved in the maturation of iron-sulfur cluster-containing proteins. Seems to help targeting proteins to be folded toward HscA. The protein is Co-chaperone protein HscB homolog of Shewanella denitrificans (strain OS217 / ATCC BAA-1090 / DSM 15013).